We begin with the raw amino-acid sequence, 334 residues long: Trans-1,2-dihydrobenzene-1,2-diol dehydrogenase (334 aa).

This sequence belongs to the Gfo/Idh/MocA family. In terms of assembly, homodimer. As to expression, kidney.

It catalyses the reaction (1R,2R)-1,2-dihydrobenzene-1,2-diol + NADP(+) = catechol + NADPH + H(+). The catalysed reaction is D-xylose + NADP(+) = D-xylono-1,5-lactone + NADPH + H(+). The protein is Trans-1,2-dihydrobenzene-1,2-diol dehydrogenase (DHDH) of Macaca fascicularis (Crab-eating macaque).